Reading from the N-terminus, the 328-residue chain is 4-hydroxy-3-methylbut-2-enyl diphosphate reductase (328 aa).

Cysteine 24 serves as a coordination point for [4Fe-4S] cluster. (2E)-4-hydroxy-3-methylbut-2-enyl diphosphate is bound by residues histidine 55 and histidine 88. Dimethylallyl diphosphate contacts are provided by histidine 55 and histidine 88. Residues histidine 55 and histidine 88 each coordinate isopentenyl diphosphate. Cysteine 110 is a [4Fe-4S] cluster binding site. A (2E)-4-hydroxy-3-methylbut-2-enyl diphosphate-binding site is contributed by histidine 138. A dimethylallyl diphosphate-binding site is contributed by histidine 138. Histidine 138 is a binding site for isopentenyl diphosphate. Glutamate 140 (proton donor) is an active-site residue. Threonine 178 is a (2E)-4-hydroxy-3-methylbut-2-enyl diphosphate binding site. [4Fe-4S] cluster is bound at residue cysteine 208. Positions 236, 237, 238, and 279 each coordinate (2E)-4-hydroxy-3-methylbut-2-enyl diphosphate. The dimethylallyl diphosphate site is built by serine 236, serine 237, asparagine 238, and serine 279. 4 residues coordinate isopentenyl diphosphate: serine 236, serine 237, asparagine 238, and serine 279.

The protein belongs to the IspH family. [4Fe-4S] cluster serves as cofactor.

The enzyme catalyses isopentenyl diphosphate + 2 oxidized [2Fe-2S]-[ferredoxin] + H2O = (2E)-4-hydroxy-3-methylbut-2-enyl diphosphate + 2 reduced [2Fe-2S]-[ferredoxin] + 2 H(+). The catalysed reaction is dimethylallyl diphosphate + 2 oxidized [2Fe-2S]-[ferredoxin] + H2O = (2E)-4-hydroxy-3-methylbut-2-enyl diphosphate + 2 reduced [2Fe-2S]-[ferredoxin] + 2 H(+). The protein operates within isoprenoid biosynthesis; dimethylallyl diphosphate biosynthesis; dimethylallyl diphosphate from (2E)-4-hydroxy-3-methylbutenyl diphosphate: step 1/1. It functions in the pathway isoprenoid biosynthesis; isopentenyl diphosphate biosynthesis via DXP pathway; isopentenyl diphosphate from 1-deoxy-D-xylulose 5-phosphate: step 6/6. Functionally, catalyzes the conversion of 1-hydroxy-2-methyl-2-(E)-butenyl 4-diphosphate (HMBPP) into a mixture of isopentenyl diphosphate (IPP) and dimethylallyl diphosphate (DMAPP). Acts in the terminal step of the DOXP/MEP pathway for isoprenoid precursor biosynthesis. The sequence is that of 4-hydroxy-3-methylbut-2-enyl diphosphate reductase from Ehrlichia ruminantium (strain Gardel).